The following is a 302-amino-acid chain: NAD kinase 2 (302 aa).

The active-site Proton acceptor is the Asp-78. NAD(+) contacts are provided by residues Asp-78–Gly-79, Asn-152–Glu-153, Asp-182, Thr-193–Ser-198, and Ala-217.

It belongs to the NAD kinase family. A divalent metal cation serves as cofactor.

The protein resides in the cytoplasm. It carries out the reaction NAD(+) + ATP = ADP + NADP(+) + H(+). Functionally, involved in the regulation of the intracellular balance of NAD and NADP, and is a key enzyme in the biosynthesis of NADP. Catalyzes specifically the phosphorylation on 2'-hydroxyl of the adenosine moiety of NAD to yield NADP. The polypeptide is NAD kinase 2 (Prochlorococcus marinus (strain SARG / CCMP1375 / SS120)).